A 150-amino-acid polypeptide reads, in one-letter code: UPF0756 membrane protein ABSDF1616 (150 aa).

The next 4 helical transmembrane spans lie at 1–21 (MLAQ…CGLL), 45–65 (FFPY…TIGV), 83–103 (FISF…WLGG), and 115–135 (VVAG…GVPV).

This sequence belongs to the UPF0756 family.

It localises to the cell membrane. This chain is UPF0756 membrane protein ABSDF1616, found in Acinetobacter baumannii (strain SDF).